The sequence spans 213 residues: Thymidine kinase (213 aa).

Residues 20 to 27 (GPMFSGKT) and 93 to 96 (DEAQ) contribute to the ATP site. The Proton acceptor role is filled by glutamate 94. Positions 150, 153, 185, and 188 each coordinate Zn(2+).

Belongs to the thymidine kinase family. Homotetramer.

The protein resides in the cytoplasm. It catalyses the reaction thymidine + ATP = dTMP + ADP + H(+). In Mycoplasma genitalium (strain ATCC 33530 / DSM 19775 / NCTC 10195 / G37) (Mycoplasmoides genitalium), this protein is Thymidine kinase.